A 305-amino-acid chain; its full sequence is uncharacterized protein (305 aa).

The protein belongs to the IIV-6 436R family.

This is an uncharacterized protein from Acheta domesticus (House cricket).